A 509-amino-acid polypeptide reads, in one-letter code: Pituitary homeobox homolog Ptx1 (509 aa).

A compositionally biased stretch (low complexity) spans 70 to 98 (NGAGSAGSAESATTTSTALSSGSTGSSTV). 3 disordered regions span residues 70 to 125 (NGAG…SSVS), 148 to 171 (QDLV…PKHE), and 204 to 273 (LNNF…HFTS). A compositionally biased stretch (polar residues) spans 227–242 (RSVNETTIKTENISSS). Over residues 243-258 (GHDEPMTTSGEEPKND) the composition is skewed to basic and acidic residues. Residues 259–269 (KKNKRQRRQRT) are compositionally biased toward basic residues. Positions 262–322 (KRQRRQRTHF…KNRRAKWRKR (61 aa)) form a DNA-binding region, homeobox. The OAR signature appears at 460 to 473 (SSIATLRLKAKQHA). The short motif at 464–470 (TLRLKAK) is the Nuclear localization signal element.

This sequence belongs to the paired homeobox family. Bicoid subfamily.

The protein resides in the nucleus. Appears to control physiological cell functions rather than pattern formation during embryogenesis. The polypeptide is Pituitary homeobox homolog Ptx1 (Ptx1) (Drosophila melanogaster (Fruit fly)).